A 403-amino-acid polypeptide reads, in one-letter code: Imidazolonepropionase (403 aa).

The Fe(3+) site is built by H68 and H70. The Zn(2+) site is built by H68 and H70. Positions 77, 140, and 173 each coordinate 4-imidazolone-5-propanoate. Y140 serves as a coordination point for N-formimidoyl-L-glutamate. H238 serves as a coordination point for Fe(3+). Zn(2+) is bound at residue H238. A 4-imidazolone-5-propanoate-binding site is contributed by Q241. Fe(3+) is bound at residue D313. D313 lines the Zn(2+) pocket. N-formimidoyl-L-glutamate is bound by residues N315 and G317. S318 is a binding site for 4-imidazolone-5-propanoate.

This sequence belongs to the metallo-dependent hydrolases superfamily. HutI family. Zn(2+) is required as a cofactor. It depends on Fe(3+) as a cofactor.

It is found in the cytoplasm. The catalysed reaction is 4-imidazolone-5-propanoate + H2O = N-formimidoyl-L-glutamate. Its pathway is amino-acid degradation; L-histidine degradation into L-glutamate; N-formimidoyl-L-glutamate from L-histidine: step 3/3. Its function is as follows. Catalyzes the hydrolytic cleavage of the carbon-nitrogen bond in imidazolone-5-propanoate to yield N-formimidoyl-L-glutamate. It is the third step in the universal histidine degradation pathway. This Hahella chejuensis (strain KCTC 2396) protein is Imidazolonepropionase.